The sequence spans 211 residues: Uridine kinase (211 aa).

Residue 12-19 participates in ATP binding; the sequence is GGSGSGKT.

It belongs to the uridine kinase family.

The protein resides in the cytoplasm. The enzyme catalyses uridine + ATP = UMP + ADP + H(+). The catalysed reaction is cytidine + ATP = CMP + ADP + H(+). Its pathway is pyrimidine metabolism; CTP biosynthesis via salvage pathway; CTP from cytidine: step 1/3. It participates in pyrimidine metabolism; UMP biosynthesis via salvage pathway; UMP from uridine: step 1/1. This is Uridine kinase from Geobacillus sp. (strain WCH70).